The following is a 302-amino-acid chain: Acetaldehyde dehydrogenase (302 aa).

12 to 15 (SGNI) contributes to the NAD(+) binding site. Cys-127 serves as the catalytic Acyl-thioester intermediate. Residues 158-166 (SAGPGTRQN) and Asn-276 each bind NAD(+).

This sequence belongs to the acetaldehyde dehydrogenase family.

The enzyme catalyses acetaldehyde + NAD(+) + CoA = acetyl-CoA + NADH + H(+). In Geobacillus genomosp. 3, this protein is Acetaldehyde dehydrogenase (nahO).